A 367-amino-acid polypeptide reads, in one-letter code: Queuine tRNA-ribosyltransferase (367 aa).

Asp-92 serves as the catalytic Proton acceptor. Substrate is bound by residues 92 to 96, Asp-146, Gln-188, and Gly-215; that span reads DSGGF. Residues 246 to 252 are RNA binding; it reads GVGTPKD. Catalysis depends on Asp-265, which acts as the Nucleophile. Residues Cys-303, Cys-305, Cys-308, and His-334 each contribute to the Zn(2+) site.

Belongs to the queuine tRNA-ribosyltransferase family. In terms of assembly, homodimer. Within each dimer, one monomer is responsible for RNA recognition and catalysis, while the other monomer binds to the replacement base PreQ1. The cofactor is Zn(2+).

The enzyme catalyses 7-aminomethyl-7-carbaguanine + guanosine(34) in tRNA = 7-aminomethyl-7-carbaguanosine(34) in tRNA + guanine. The protein operates within tRNA modification; tRNA-queuosine biosynthesis. In terms of biological role, catalyzes the base-exchange of a guanine (G) residue with the queuine precursor 7-aminomethyl-7-deazaguanine (PreQ1) at position 34 (anticodon wobble position) in tRNAs with GU(N) anticodons (tRNA-Asp, -Asn, -His and -Tyr). Catalysis occurs through a double-displacement mechanism. The nucleophile active site attacks the C1' of nucleotide 34 to detach the guanine base from the RNA, forming a covalent enzyme-RNA intermediate. The proton acceptor active site deprotonates the incoming PreQ1, allowing a nucleophilic attack on the C1' of the ribose to form the product. After dissociation, two additional enzymatic reactions on the tRNA convert PreQ1 to queuine (Q), resulting in the hypermodified nucleoside queuosine (7-(((4,5-cis-dihydroxy-2-cyclopenten-1-yl)amino)methyl)-7-deazaguanosine). This chain is Queuine tRNA-ribosyltransferase, found in Francisella tularensis subsp. mediasiatica (strain FSC147).